The primary structure comprises 243 residues: Adenylate dimethylallyltransferase (243 aa).

This sequence belongs to the isopentenyl transferase family.

It catalyses the reaction dimethylallyl diphosphate + AMP = N(6)-(dimethylallyl)adenosine 5'-phosphate + diphosphate. Its function is as follows. Transfers dimethylallyl groups to AMP as part of the biosynthesis of cytokinin phytohormones. The polypeptide is Adenylate dimethylallyltransferase (tzs) (Rhizobium rhizogenes (Agrobacterium rhizogenes)).